A 145-amino-acid polypeptide reads, in one-letter code: MIGLVQRVKQAAVEIDQLPVCAIGRGILLFLAIEKGDNEKNGDLLIEKVLNCRIFSDQSGKMNLSLLDIRGELLIVPEFTLAGKIAKGKRPSFDMAAPAEVAKKLFDYVSGQIENKYKAVKKGYFGADMSVYLINDGPVTFWLKC.

The Gly-cisPro motif, important for rejection of L-amino acids signature appears at 137–138 (GP).

This sequence belongs to the DTD family. Homodimer.

The protein localises to the cytoplasm. It carries out the reaction glycyl-tRNA(Ala) + H2O = tRNA(Ala) + glycine + H(+). The enzyme catalyses a D-aminoacyl-tRNA + H2O = a tRNA + a D-alpha-amino acid + H(+). An aminoacyl-tRNA editing enzyme that deacylates mischarged D-aminoacyl-tRNAs. Also deacylates mischarged glycyl-tRNA(Ala), protecting cells against glycine mischarging by AlaRS. Acts via tRNA-based rather than protein-based catalysis; rejects L-amino acids rather than detecting D-amino acids in the active site. By recycling D-aminoacyl-tRNA to D-amino acids and free tRNA molecules, this enzyme counteracts the toxicity associated with the formation of D-aminoacyl-tRNA entities in vivo and helps enforce protein L-homochirality. This chain is D-aminoacyl-tRNA deacylase, found in Methylacidiphilum infernorum (isolate V4) (Methylokorus infernorum (strain V4)).